The following is a 721-amino-acid chain: Angiomotin-like 2a (721 aa).

A disordered region spans residues 35 to 84; the sequence is QQALRGGSSGGGAGSPRSSLESLTQEESLSPQLSARQEPQGQEHQGDFQH. Residues 49 to 68 show a composition bias toward low complexity; it reads SPRSSLESLTQEESLSPQLS. Residue Tyr103 is modified to Phosphotyrosine; by FGFR1. A disordered region spans residues 169 to 214; it reads DNIPMSSSHSYPQLSNNHSDTVVNEQSVHQPDQRGPPPEYPFMVRS. A compositionally biased stretch (polar residues) spans 172-198; it reads PMSSSHSYPQLSNNHSDTVVNEQSVHQ. The stretch at 275–531 forms a coiled coil; that stretch reads ANNFQMEQLI…TRWEQKYLEE (257 aa). The span at 554–567 shows a compositional bias: polar residues; the sequence is INHSPRNSPNSSFN. 2 disordered regions span residues 554–575 and 666–709; these read INHSPRNSPNSSFNEDLPSPNH and DSST…TQIS. Over residues 688–702 the composition is skewed to low complexity; that stretch reads SAPEPSTASSSESTS. Positions 718–721 match the PDZ-binding motif; it reads EILI.

Belongs to the angiomotin family. In terms of assembly, interacts with SRC. Phosphorylation at Tyr-103 is necessary for efficient binding to SRC and synergistically functioning with SRC to activate the downstream MAPK pathway. Expressed in endothelial cells.

Its subcellular location is the recycling endosome. It localises to the cytoplasm. The protein localises to the cell projection. The protein resides in the podosome. It is found in the cell junction. In terms of biological role, required for proper architecture of actin filaments and for cell movements during embryogenesis. Plays a role in the radial actin fiber architecture in skin epithelial cells, thereby maintains cell geometry, size and cell interconnectivity within the skin. Plays an important role in coupling actin fibers to cell junctions in endothelial cells and is therefore required for correct endothelial cell morphology and maintenance of dorsal aorta lumen expansion during embryogenesis. May further play a role in the polarity, proliferation and migration of endothelial cells, and therefore participates in angiogenesis. Inhibits the Wnt/beta-catenin signaling pathway, probably by recruiting CTNNB1 to recycling endosomes and hence preventing its translocation to the nucleus. Regulates the translocation of phosphorylated SRC to peripheral cell-matrix adhesion sites. Selectively promotes FGF-induced MAPK activation through SRC. The sequence is that of Angiomotin-like 2a (amotl2a) from Danio rerio (Zebrafish).